Here is a 248-residue protein sequence, read N- to C-terminus: 3-deoxy-manno-octulosonate cytidylyltransferase (248 aa).

This sequence belongs to the KdsB family.

The protein localises to the cytoplasm. The enzyme catalyses 3-deoxy-alpha-D-manno-oct-2-ulosonate + CTP = CMP-3-deoxy-beta-D-manno-octulosonate + diphosphate. It participates in nucleotide-sugar biosynthesis; CMP-3-deoxy-D-manno-octulosonate biosynthesis; CMP-3-deoxy-D-manno-octulosonate from 3-deoxy-D-manno-octulosonate and CTP: step 1/1. Its pathway is bacterial outer membrane biogenesis; lipopolysaccharide biosynthesis. In terms of biological role, activates KDO (a required 8-carbon sugar) for incorporation into bacterial lipopolysaccharide in Gram-negative bacteria. This chain is 3-deoxy-manno-octulosonate cytidylyltransferase, found in Salmonella enteritidis PT4 (strain P125109).